We begin with the raw amino-acid sequence, 534 residues long: Nitrate/nitrite transporter NrtP (534 aa).

12 consecutive transmembrane segments (helical) span residues 19–39 (WFAF…ATTI), 52–72 (TIGL…GMLL), 79–99 (LTYS…ATAQ), 109–129 (LLMG…AEWF), 150–170 (AFSA…PGAF), 195–215 (AAIA…YFSV), 240–260 (DFWF…VLAW), 266–286 (NFLN…LYLF), 382–404 (WTMV…VAGT), 409–431 (IAVL…TFAI), 445–465 (GNVG…LLLL), and 485–505 (GFFQ…AFFL).

The protein belongs to the major facilitator superfamily. Nitrate/nitrite porter (TC 2.A.1.8) family.

It is found in the cell inner membrane. High-efficiency transport system for both nitrate and nitrite. The polypeptide is Nitrate/nitrite transporter NrtP (Picosynechococcus sp. (strain ATCC 27264 / PCC 7002 / PR-6) (Agmenellum quadruplicatum)).